The following is a 153-amino-acid chain: SsrA-binding protein (153 aa).

Over residues 133-143 (ADLKERDDKRQ) the composition is skewed to basic and acidic residues. The segment at 133-153 (ADLKERDDKRQMQQALKQQQY) is disordered. Residues 144 to 153 (MQQALKQQQY) show a composition bias toward low complexity.

Belongs to the SmpB family.

The protein localises to the cytoplasm. Functionally, required for rescue of stalled ribosomes mediated by trans-translation. Binds to transfer-messenger RNA (tmRNA), required for stable association of tmRNA with ribosomes. tmRNA and SmpB together mimic tRNA shape, replacing the anticodon stem-loop with SmpB. tmRNA is encoded by the ssrA gene; the 2 termini fold to resemble tRNA(Ala) and it encodes a 'tag peptide', a short internal open reading frame. During trans-translation Ala-aminoacylated tmRNA acts like a tRNA, entering the A-site of stalled ribosomes, displacing the stalled mRNA. The ribosome then switches to translate the ORF on the tmRNA; the nascent peptide is terminated with the 'tag peptide' encoded by the tmRNA and targeted for degradation. The ribosome is freed to recommence translation, which seems to be the essential function of trans-translation. This chain is SsrA-binding protein, found in Protochlamydia amoebophila (strain UWE25).